The chain runs to 198 residues: NAD(P)H dehydrogenase (quinone) (198 aa).

The Flavodoxin-like domain occupies 4–189; the sequence is ILVLYYSMYG…SIARYQGEYV (186 aa). FMN is bound by residues 10–15 and 78–80; these read SMYGHI and TRF. Residue Tyr12 participates in NAD(+) binding. Residue Trp98 coordinates substrate. Residues 113-118 and His133 each bind FMN; that span reads STGTGG.

This sequence belongs to the WrbA family. FMN serves as cofactor.

The enzyme catalyses a quinone + NADH + H(+) = a quinol + NAD(+). It carries out the reaction a quinone + NADPH + H(+) = a quinol + NADP(+). The sequence is that of NAD(P)H dehydrogenase (quinone) from Salmonella paratyphi C (strain RKS4594).